The sequence spans 129 residues: Beta-galactoside-binding lectin (129 aa).

An N-acetylserine modification is found at S1. One can recognise a Galectin domain in the interval 4 to 129; the sequence is GVVDERMSFK…EARIYSIEIK (126 aa). 69-75 serves as a coordination point for a beta-D-galactoside; the sequence is WGTEQRE.

In terms of biological role, this protein binds beta-galactoside. Its physiological function is not yet known. The chain is Beta-galactoside-binding lectin from Electrophorus electricus (Electric eel).